The following is a 368-amino-acid chain: tRNA-specific 2-thiouridylase MnmA (368 aa).

ATP is bound by residues 11–18 and Met-37; that span reads GMSGGVDS. The interval 97 to 99 is interaction with target base in tRNA; the sequence is NPD. Cys-102 acts as the Nucleophile in catalysis. Cysteines 102 and 199 form a disulfide. ATP is bound at residue Gly-127. Residues 149–151 form an interaction with tRNA region; that stretch reads KDQ. Catalysis depends on Cys-199, which acts as the Cysteine persulfide intermediate. The interaction with tRNA stretch occupies residues 311 to 312; that stretch reads RY.

It belongs to the MnmA/TRMU family. As to quaternary structure, interacts with TusE.

It is found in the cytoplasm. The enzyme catalyses S-sulfanyl-L-cysteinyl-[protein] + uridine(34) in tRNA + AH2 + ATP = 2-thiouridine(34) in tRNA + L-cysteinyl-[protein] + A + AMP + diphosphate + H(+). Functionally, catalyzes the 2-thiolation of uridine at the wobble position (U34) of tRNA(Lys), tRNA(Glu) and tRNA(Gln), leading to the formation of s(2)U34, the first step of tRNA-mnm(5)s(2)U34 synthesis. Sulfur is provided by IscS, via a sulfur-relay system. Binds ATP and its substrate tRNAs. This chain is tRNA-specific 2-thiouridylase MnmA, found in Escherichia coli O139:H28 (strain E24377A / ETEC).